The primary structure comprises 262 residues: Type III pantothenate kinase (262 aa).

An ATP-binding site is contributed by 10-17 (DIGNTTTV). Substrate is bound at residue 110–113 (GADR). Residue D112 is the Proton acceptor of the active site. D134 is a K(+) binding site. T137 contacts ATP. T189 contacts substrate.

Belongs to the type III pantothenate kinase family. As to quaternary structure, homodimer. The cofactor is NH4(+). It depends on K(+) as a cofactor.

The protein localises to the cytoplasm. The enzyme catalyses (R)-pantothenate + ATP = (R)-4'-phosphopantothenate + ADP + H(+). Its pathway is cofactor biosynthesis; coenzyme A biosynthesis; CoA from (R)-pantothenate: step 1/5. Catalyzes the phosphorylation of pantothenate (Pan), the first step in CoA biosynthesis. This is Type III pantothenate kinase from Deinococcus radiodurans (strain ATCC 13939 / DSM 20539 / JCM 16871 / CCUG 27074 / LMG 4051 / NBRC 15346 / NCIMB 9279 / VKM B-1422 / R1).